The following is a 529-amino-acid chain: Phenylalanine N-monooxygenase (529 aa).

A helical transmembrane segment spans residues 1–21; that stretch reads MLDSTPMLAFIIGLLLLALTM. C467 serves as a coordination point for heme.

Belongs to the cytochrome P450 family. It depends on heme as a cofactor.

The protein resides in the endoplasmic reticulum membrane. The enzyme catalyses L-phenylalanine + 2 reduced [NADPH--hemoprotein reductase] + 2 O2 = (E)-phenylacetaldehyde oxime + 2 oxidized [NADPH--hemoprotein reductase] + CO2 + 3 H2O + 2 H(+). It participates in secondary metabolite biosynthesis; phenylglucosinolate biosynthesis. Functionally, converts L-phenylalanine into phenylacetaldoxime, the precursor of benzylglucosinolate (glucotropeolin). The polypeptide is Phenylalanine N-monooxygenase (CYP79A2) (Arabidopsis thaliana (Mouse-ear cress)).